We begin with the raw amino-acid sequence, 113 residues long: UPF0060 membrane protein Mmcs_2513 (113 aa).

4 helical membrane-spanning segments follow: residues 12 to 32 (ALFVLAALLEIGGAWLVWQGV), 37 to 57 (GWIWAGAGVIALGAYGFVAAF), 66 to 86 (ILAAYGGVFVAGSLLWGVVVD), and 92 to 112 (RWDLTGALVCLVGVGLIMYAP).

It belongs to the UPF0060 family.

It localises to the cell membrane. The chain is UPF0060 membrane protein Mmcs_2513 from Mycobacterium sp. (strain MCS).